The following is a 396-amino-acid chain: 8-amino-7-oxononanoate synthase (396 aa).

Arginine 31 serves as a coordination point for substrate. Pyridoxal 5'-phosphate is bound at residue 118–119 (GY). A substrate-binding site is contributed by histidine 143. Serine 189, histidine 217, and threonine 245 together coordinate pyridoxal 5'-phosphate. Lysine 248 is modified (N6-(pyridoxal phosphate)lysine). A substrate-binding site is contributed by threonine 362.

The protein belongs to the class-II pyridoxal-phosphate-dependent aminotransferase family. BioF subfamily. Homodimer. Pyridoxal 5'-phosphate serves as cofactor.

The catalysed reaction is 6-carboxyhexanoyl-[ACP] + L-alanine + H(+) = (8S)-8-amino-7-oxononanoate + holo-[ACP] + CO2. It functions in the pathway cofactor biosynthesis; biotin biosynthesis. Catalyzes the decarboxylative condensation of pimeloyl-[acyl-carrier protein] and L-alanine to produce 8-amino-7-oxononanoate (AON), [acyl-carrier protein], and carbon dioxide. The polypeptide is 8-amino-7-oxononanoate synthase (Methylobacillus flagellatus (strain ATCC 51484 / DSM 6875 / VKM B-1610 / KT)).